A 510-amino-acid chain; its full sequence is Chorion transcription factor Cf2 (510 aa).

Over residues 1–10 (MIKSTTNPQE) the composition is skewed to polar residues. Residues 1 to 40 (MIKSTTNPQEQRLPRPEDQSPAPPPPPPSSATTSTAAPAT) are disordered. Residues 30–40 (SATTSTAAPAT) show a composition bias toward low complexity. 2 C2H2-type zinc fingers span residues 74–97 (HYCP…QLCH) and 125–148 (HPCF…RLAH). Over residues 222–237 (PEEQHHQQQLQAEHHH) the composition is skewed to basic and acidic residues. A disordered region spans residues 222–279 (PEEQHHQQQLQAEHHHQQQHQQQQQQQQQQQELLEQQQREMQEQAQQQQVHHHQQDQD). Residues 240 to 257 (QHQQQQQQQQQQQELLEQ) are compositionally biased toward low complexity. 5 consecutive C2H2-type zinc fingers follow at residues 366-388 (HKCP…RKIH), 401-423 (YTCS…TRIH), 429-451 (FRCG…LTTH), 457-479 (FHCG…IRTH), and 485-508 (YTCP…TKLH).

As to expression, isoform I is found in embryos, pupae and adult somatic tissue; isoform II occurs in embryos, pupae, ovaries, testis and to a lesser extent in adult somatic tissue.

The protein localises to the nucleus. Transcriptional regulator; binds to the promoter region of Cp15. Also binds to its own promoter, thus having a probable autoregulatory role. The chain is Chorion transcription factor Cf2 (Cf2) from Drosophila melanogaster (Fruit fly).